We begin with the raw amino-acid sequence, 521 residues long: Cytochrome P450 52A9 (521 aa).

C468 contributes to the heme binding site.

The protein belongs to the cytochrome P450 family. Requires heme as cofactor.

Its subcellular location is the membrane. Together with an NADPH cytochrome P450 the enzyme system catalyzes the terminal hydroxylation as the first step in the assimilation of alkanes and fatty acids. The chain is Cytochrome P450 52A9 (CYP52A9) from Candida maltosa (Yeast).